A 213-amino-acid chain; its full sequence is Thymidylate kinase (213 aa).

Gly-10–Thr-17 lines the ATP pocket.

The protein belongs to the thymidylate kinase family.

It catalyses the reaction dTMP + ATP = dTDP + ADP. Functionally, phosphorylation of dTMP to form dTDP in both de novo and salvage pathways of dTTP synthesis. The sequence is that of Thymidylate kinase from Escherichia coli O6:K15:H31 (strain 536 / UPEC).